Reading from the N-terminus, the 1445-residue chain is MQGPPLLTAAHLLCVCTAALAVAPGPRFLVTAPGIIRPGGNVTIGVELLEHCPSQVTVKAELLKTASNLTVSVLEAEGVFEKGSFKTLTLPSLPLNSADEIYELRVTGRTQDEILFSNSTRLSFETKRISVFIQTDKALYKPKQEVKFRIVTLFSDFKPYKTSLNILIKDPKSNLIQQWLSQQSDLGVISKTFQLSSHPILGDWSIQVQVNDQTYYQSFQVSEYVLPKFEVTLQTPLYCSMNSKHLNGTITAKYTYGKPVKGDVTLTFLPLSFWGKKKNITKTFKINGSANFSFNDEEMKNVMDSSNGLSEYLDLSSPGPVEILTTVTESVTGISRNVSTNVFFKQHDYIIEFFDYTTVLKPSLNFTATVKVTRADGNQLTLEERRNNVVITVTQRNYTEYWSGSNSGNQKMEAVQKINYTVPQSGTFKIEFPILEDSSELQLKAYFLGSKSSMAVHSLFKSPSKTYIQLKTRDENIKVGSPFELVVSGNKRLKELSYMVVSRGQLVAVGKQNSTMFSLTPENSWTPKACVIVYYIEDDGEIISDVLKIPVQLVFKNKIKLYWSKVKAEPSEKVSLRISVTQPDSIVGIVAVDKSVNLMNASNDITMENVVHELELYNTGYYLGMFMNSFAVFQECGLWVLTDANLTKDYIDGVYDNAEYAERFMEENEGHIVDIHDFSLGSSPHVRKHFPETWIWLDTNMGYRIYQEFEVTVPDSITSWVATGFVISEDLGLGLTTTPVELQAFQPFFIFLNLPYSVIRGEEFALEITIFNYLKDATEVKVIIEKSDKFDILMTSNEINATGHQQTLLVPSEDGATVLFPIRPTHLGEIPITVTALSPTASDAVTQMILVKAEGIEKSYSQSILLDLTDNRLQSTLKTLSFSFPPNTVTGSERVQITAIGDVLGPSINGLASLIRMPYGCGEQNMINFAPNIYILDYLTKKKQLTDNLKEKALSFMRQGYQRELLYQREDGSFSAFGNYDPSGSTWLSAFVLRCFLEADPYIDIDQNVLHRTYTWLKGHQKSNGEFWDPGRVIHSELQGGNKSPVTLTAYIVTSLLGYRKYQPNIDVQESIHFLESEFSRGISDNYTLALITYALSSVGSPKAKEALNMLTWRAEQEGGMQFWVSSESKLSDSWQPRSLDIEVAAYALLSHFLQFQTSEGIPIMRWLSRQRNSLGGFASTQDTTVALKALSEFAALMNTERTNIQVTVTGPSSPSPVKFLIDTHNRLLLQTAELAVVQPTAVNISANGFGFAICQLNVVYNVKASGSSRRRRSIQNQEAFDLDVAVKENKDDLNHVDLNVCTSFSGPGRSGMALMEVNLLSGFMVPSEAISLSETVKKVEYDHGKLNLYLDSVNETQFCVNIPAVRNFKVSNTQDASVSIVDYYEPRRQAVRSYNSEVKLSSCDLCSDVQGCRPCEDGASGSHHHSSVIFIFCFKLLYFMELWL.

Residues 1–21 form the signal peptide; it reads MQGPPLLTAAHLLCVCTAALA. Residues N68, N118, N247, N279, N365, N419, N513, and N645 are each glycosylated (N-linked (GlcNAc...) asparagine). Residues 593-702 are bait region (approximate); it reads DKSVNLMNAS…TWIWLDTNMG (110 aa). A cross-link (isoglutamyl cysteine thioester (Cys-Gln)) is located at residues 921–924; sequence CGEQ. N-linked (GlcNAc...) asparagine glycosylation is found at N1086 and N1355. Residue A1420 is the site of GPI-anchor amidated alanine attachment. A propeptide spans 1421–1445 (removed in mature form); that stretch reads SGSHHHSSVIFIFCFKLLYFMELWL.

Belongs to the protease inhibitor I39 (alpha-2-macroglobulin) family. Heterodimer; disulfide-linked. Interacts with TGFB1 and TGFBR1. Forms a heteromeric complex with TGFBR1, TGFBR2 and TGFBR3 in a ligand-independent manner. In terms of processing, N-glycosylated. Post-translationally, 2 forms of 150 (p150) and 120 kDa (p120) exist due to proteolytic degradation from a 180 kDa form. In terms of tissue distribution, widely expressed with high level in uterus, aorta, heart, lung, trachea, placenta and in fetal heart, kidney, liver, spleen and lung. Expressed by CD34(+) acute myeloid leukemia cell lines, T-cell lines, activated T-lymphoblasts, endothelial cells and activated platelets. Isoform 4 is expressed in placenta. Isoform 1 is expressed in keratinocytes and placenta.

Its subcellular location is the cell membrane. Functionally, modulates negatively TGFB1 signaling in keratinocytes. This Homo sapiens (Human) protein is CD109 antigen (CD109).